The primary structure comprises 154 residues: Sec-independent protein translocase protein TatB (154 aa).

The chain crosses the membrane as a helical span at residues 1-21; the sequence is MIDIGITKLAIIGGIALIVIG.

The protein belongs to the TatB family. In terms of assembly, the Tat system comprises two distinct complexes: a TatABC complex, containing multiple copies of TatA, TatB and TatC subunits, and a separate TatA complex, containing only TatA subunits. Substrates initially bind to the TatABC complex, which probably triggers association of the separate TatA complex to form the active translocon.

The protein localises to the cell inner membrane. Part of the twin-arginine translocation (Tat) system that transports large folded proteins containing a characteristic twin-arginine motif in their signal peptide across membranes. Together with TatC, TatB is part of a receptor directly interacting with Tat signal peptides. TatB may form an oligomeric binding site that transiently accommodates folded Tat precursor proteins before their translocation. The sequence is that of Sec-independent protein translocase protein TatB from Albidiferax ferrireducens (strain ATCC BAA-621 / DSM 15236 / T118) (Rhodoferax ferrireducens).